The sequence spans 361 residues: Chorismate synthase (361 aa).

The NADP(+) site is built by R48 and R54. FMN-binding positions include 125–127, 238–239, G278, 293–297, and R319; these read RSS, NA, and KPTSS.

This sequence belongs to the chorismate synthase family. In terms of assembly, homotetramer. FMNH2 is required as a cofactor.

The enzyme catalyses 5-O-(1-carboxyvinyl)-3-phosphoshikimate = chorismate + phosphate. Its pathway is metabolic intermediate biosynthesis; chorismate biosynthesis; chorismate from D-erythrose 4-phosphate and phosphoenolpyruvate: step 7/7. Functionally, catalyzes the anti-1,4-elimination of the C-3 phosphate and the C-6 proR hydrogen from 5-enolpyruvylshikimate-3-phosphate (EPSP) to yield chorismate, which is the branch point compound that serves as the starting substrate for the three terminal pathways of aromatic amino acid biosynthesis. This reaction introduces a second double bond into the aromatic ring system. This Escherichia coli O139:H28 (strain E24377A / ETEC) protein is Chorismate synthase.